Reading from the N-terminus, the 324-residue chain is O-ureido-L-serine synthase (324 aa).

At lysine 43 the chain carries N6-(pyridoxal phosphate)lysine. Pyridoxal 5'-phosphate-binding positions include asparagine 73, 177-181 (GTTGT), and serine 265.

Belongs to the cysteine synthase/cystathionine beta-synthase family. Homotetramer. The cofactor is pyridoxal 5'-phosphate.

The enzyme catalyses hydroxyurea + O-acetyl-L-serine = O-ureido-L-serine + acetate + H(+). It carries out the reaction O-acetyl-L-serine + hydrogen sulfide = L-cysteine + acetate. Involved in the biosynthesis of the antibiotic D-cycloserine (DCS), a cyclic structural analog of D-alanine, used as an antitubercular agent. Catalyzes the addition of hydroxyurea on O-acetyl-L-serine (OAS) to yield O-ureido-L-serine. It prefers sulfide as the second substrate, followed by hydroxyurea, L-homocysteine, and thiosulfate. In Streptomyces lavendulae, this protein is O-ureido-L-serine synthase.